The primary structure comprises 206 residues: Inosine triphosphate pyrophosphatase (206 aa).

Position 21-26 (21-26 (TGNAKK)) interacts with ITP. Glu-49 serves as a coordination point for Mg(2+). Residues Lys-61, 77-78 (DT), Lys-94, 153-156 (FGWD), Lys-176, and 181-182 (HR) each bind ITP.

It belongs to the HAM1 NTPase family. In terms of assembly, homodimer. The cofactor is Mg(2+). Requires Mn(2+) as cofactor.

The protein localises to the cytoplasm. It carries out the reaction ITP + H2O = IMP + diphosphate + H(+). The catalysed reaction is dITP + H2O = dIMP + diphosphate + H(+). It catalyses the reaction XTP + H2O = XMP + diphosphate + H(+). Functionally, pyrophosphatase that hydrolyzes non-canonical purine nucleotides such as inosine triphosphate (ITP), deoxyinosine triphosphate (dITP) or xanthosine 5'-triphosphate (XTP) to their respective monophosphate derivatives. The enzyme does not distinguish between the deoxy- and ribose forms. Probably excludes non-canonical purines from RNA and DNA precursor pools, thus preventing their incorporation into RNA and DNA and avoiding chromosomal lesions. The sequence is that of Inosine triphosphate pyrophosphatase from Vitis vinifera (Grape).